The sequence spans 882 residues: Pentatricopeptide repeat-containing protein At3g03580 (882 aa).

PPR repeat units follow at residues 3–37 (TRVSSPFISRALSSSSNLNELRRIHALVISLGLDS), 38–68 (SDFFSGKLIDKYSHFREPASSLSVFRRVSPA), 70–104 (NVYLWNSIIRAFSKNGLFPEALEFYGKLRESKVSP), 105–139 (DKYTFPSVIKACAGLFDAEMGDLVYEQILDMGFES), 140–170 (DLFVGNALVDMYSRMGLLTRARQVFDEMPVR), 171–205 (DLVSWNSLISGYSSHGYYEEALEIYHELKNSWIVP), 206–240 (DSFTVSSVLPAFGNLLVVKQGQGLHGFALKSGVNS), 241–271 (VVVVNNGLVAMYLKFRRPTDARRVFDEMDVR), 272–307 (DSVSYNTMICGYLKLEMVEESVRMFLENLDQFKPDL), 309–340 (TVSSVLRACGHLRDLSLAKYIYNYMLKAGFVL), 341–371 (ESTVRNILIDVYAKCGDMITARDVFNSMECK), 372–406 (DTVSWNSIISGYIQSGDLMEAMKLFKMMMIMEEQA), 407–441 (DHITYLMLISVSTRLADLKFGKGLHSNGIKSGICI), 442–472 (DLSVSNALIDMYAKCGEVGDSLKIFSSMGTG), 473–507 (DTVTWNTVISACVRFGDFATGLQVTTQMRKSEVVP), 508–542 (DMATFLVTLPMCASLAAKRLGKEIHCCLLRFGYES), 543–573 (ELQIGNALIEMYSKCGCLENSSRVFERMSRR), 574–608 (DVVTWTGMIYAYGMYGEGEKALETFADMEKSGIVP), 609–639 (DSVVFIAIIYACSHSGLVDEGLACFEKMKTH), and 645–675 (MIEHYACVVDLLSRSQKISKAEEFIQAMPIK). The segment at 680 to 755 (IWASVLRACR…NPGYSWIEVG (76 aa)) is type E motif. The type E(+) motif stretch occupies residues 756–786 (KNVHVFSSGDDSAPQSEAIYKSLEILYSLMA). The segment at 787–882 (KEGYIPDPRE…DGTCSCKDRW (96 aa)) is type DYW motif.

This sequence belongs to the PPR family. PCMP-H subfamily.

The sequence is that of Pentatricopeptide repeat-containing protein At3g03580 (PCMP-H23) from Arabidopsis thaliana (Mouse-ear cress).